A 332-amino-acid chain; its full sequence is GDP-mannose transporter 2 (332 aa).

At 1–12 (MSSLKVSQQDKK) the chain is on the cytoplasmic side. The chain crosses the membrane as a helical span at residues 13-33 (WVNSGSVAILAYCASSILMTI). Topologically, residues 34 to 47 (TNKVVMSDRTFNMN) are lumenal. The helical transmembrane segment at 48–68 (FLLLFIQSLVCVITLLVLKVL) threads the bilayer. At 69 to 84 (GSVNFRSFNKTDARNW) the chain is on the cytoplasmic side. The helical transmembrane segment at 85–105 (FPISICLVLMIFTSSKSLQYL) threads the bilayer. Over 106 to 108 (SVP) the chain is Lumenal. Residues 109 to 129 (VYTIFKNLTIIVIAYGEVLFF) form a helical membrane-spanning segment. The Cytoplasmic portion of the chain corresponds to 130-131 (GS). A helical membrane pass occupies residues 132-152 (SVGNMELGSFALMIVSSLIAA). At 153 to 174 (HGDYLHSVERLKKMLGPNVSFS) the chain is on the lumenal side. N-linked (GlcNAc...) asparagine glycosylation occurs at N170. The helical transmembrane segment at 175–195 (FIVNIGYFWIAANCFASALFV) threads the bilayer. Residues 196–211 (LLMRKRIQVTNFKDFD) lie on the Cytoplasmic side of the membrane. The chain crosses the membrane as a helical span at residues 212 to 232 (TMFYNNVLSLPLLLLGSYLFE). Residues 233-248 (DWSQENLLPHVDIDNL) lie on the Lumenal side of the membrane. N-linked (GlcNAc...) asparagine glycosylation occurs at N247. Residues 249 to 269 (STMIISGLASVAISYCSGWCV) form a helical membrane-spanning segment. Residues 270–274 (RVTSS) are Cytoplasmic-facing. Residues 275 to 295 (TTYSMVGALNKLPIALTGFLF) form a helical membrane-spanning segment. Residues 296 to 300 (NDAAR) are Lumenal-facing. A helical transmembrane segment spans residues 301-321 (NLSSAASILLGFASGIIYAVA). At 322-332 (KQKKLQNSEKI) the chain is on the cytoplasmic side.

This sequence belongs to the TPT transporter family. SLC35D subfamily. Homooligomer.

The protein localises to the golgi apparatus membrane. The protein resides in the cytoplasmic vesicle membrane. Its subcellular location is the endoplasmic reticulum membrane. In terms of biological role, involved in the import of GDP-mannose from the cytoplasm into the Golgi lumen. This is GDP-mannose transporter 2 (VRG4-2) from Vanderwaltozyma polyspora (strain ATCC 22028 / DSM 70294 / BCRC 21397 / CBS 2163 / NBRC 10782 / NRRL Y-8283 / UCD 57-17) (Kluyveromyces polysporus).